A 1204-amino-acid polypeptide reads, in one-letter code: MDSLAEEFFVSGNPDVEEQTKEETEIIAEKPVTQLDKQKMDISADPEPVNALLEIKKVLNPISALPKGVFPNIEKFIQEDFSFQTMQREVTTHSQTGEEIVPALTLHFLITQLEMALRNIQASNYTAQQINVGYYLTLLFLYGVALTERAKKEDCIEAENKFLVMKMVIQESEICENFMCLVYFGRGLLRCAQKRYNGALLEFYKSLQEIGDTDDNWFEVDPTDDEDLPTTFKDSLNNFIKTTESNIMKETICSYLDCERSCEADILKNTNYKGFFQLMCSKSCCIYFHKICWKKFKNLKYPGESDQSFSGQKCLKEGCPGDMVRMLQCDVPGIVKILFEVVRKDEYITIENLGASYKNLMSLELTDTDIRPKFNLKPNTKDEVPIFKLDYNYFYHLLHIIIISGTDMVRQIFDEAMPPTLLKKELLIHKNVLEPYYNHLWTNHPLGGSWHLLYPPNKELPQSKQFDLCLLLALIKHLNVFPAPRKGWDMEPPSSDLSKSADILRLCKYRDILLSEILMNGLTELQFNSIWKKVSDILLRLGMKQDDLDKVKENPIENISLDYHQLSIYLGIPVPEIIQRMLSCYQQGITLQSITGSQRLDVEEFQNDEEDLSPPVMEYNIDVKSNTEIQLAEINKDVASIPSESSTESVKDLQEVKSKTKKKKRTKSNKKDKDSEDEQVSYMVEKDDQLETEQVDVNTLSTYMKTDTSDAQEDSAAEDKFCSLDELHILDMVEQGSSGKESTDFKETEKERLAHQHQLYKLQYECEDYKRQLKTVTFRWQENQMLIKKKEKIIVSLNQQVAFGINKMSKLQRQIHAKDDEIKNLKDQLSLKRSQWEMEKHNLESTVKTYLNKLNAETSRALTAEVYFLQCRRDFGLLHLEQTEKECLNQLARVTHMAASNLESLQLKAAVDSWNAIVADVRNKIAFLRTQYNEQINKVKQGFALSTLPPVQLPPPPPSPEILIQQFLGRPLVKESFFRPILTVPQMPAVCPGVISAAVQPRPPLMPGITWAMPTPIGDTVSPSASLCSEPLMINWERITDRLKTAFPQQTRKELTDFLQQLKDSHGKSVSRLTFDEIVYKISQMIEPKKSESEEKSAQDGNNASPSHTASQPNAPQDPKSAQGSATWEGDKDMDNEEEEEEPCVICHENLSPENLSVLPCAHKFHSQCIRPWLMQQGTCPTCRLHVLQPEEFPGHPNGQLPKI.

Disordered regions lie at residues 1–22 (MDSLAEEFFVSGNPDVEEQTKE) and 640–681 (SIPS…EQVS). The span at 649 to 658 (SVKDLQEVKS) shows a compositional bias: basic and acidic residues. Positions 659 to 668 (KTKKKKRTKS) are enriched in basic residues. Coiled-coil stretches lie at residues 746 to 861 (KETE…TSRA) and 906 to 941 (QLKAAVDSWNAIVADVRNKIAFLRTQYNEQINKVKQ). Residues 1088 to 1098 (PKKSESEEKSA) are compositionally biased toward basic and acidic residues. The interval 1088-1141 (PKKSESEEKSAQDGNNASPSHTASQPNAPQDPKSAQGSATWEGDKDMDNEEEEE) is disordered. Residues 1099 to 1126 (QDGNNASPSHTASQPNAPQDPKSAQGSA) show a composition bias toward polar residues. Positions 1132-1141 (KDMDNEEEEE) are enriched in acidic residues. An RING-type; atypical zinc finger spans residues 1144–1184 (CVICHENLSPENLSVLPCAHKFHSQCIRPWLMQQGTCPTCR).

Probably interacts with DAZL.

It localises to the cytoplasm. The enzyme catalyses S-ubiquitinyl-[E2 ubiquitin-conjugating enzyme]-L-cysteine + [acceptor protein]-L-lysine = [E2 ubiquitin-conjugating enzyme]-L-cysteine + N(6)-ubiquitinyl-[acceptor protein]-L-lysine.. Its pathway is protein modification; protein ubiquitination. In terms of biological role, E3 Ubiquitin ligase proteins mediate ubiquitination and subsequent proteasomal degradation of target proteins. E3 ubiquitin ligases accept ubiquitin from an E2 ubiquitin-conjugating enzyme in the form of a thioester and then directly transfers the ubiquitin to targeted substrates. Able to specifically bind RNA. This is E3 ubiquitin-protein ligase DZIP3 (Dzip3) from Mus musculus (Mouse).